Reading from the N-terminus, the 262-residue chain is Cytochrome c oxidase subunit 3 (262 aa).

A run of 7 helical transmembrane segments spans residues 16–36 (PWPLTGAIGAMTTVTGLVQWF), 42–59 (TLFLLGNIITMLTMYQWW), 83–103 (GMILFIISEVFFFISFFWAFF), 128–148 (FQIPLLNTAILLASGVTVTWA), 163–183 (SLFFTVLLGIYFSILQAYEYI), 198–218 (FFVATGFHGLHVLIGTSFLLI), and 240–260 (AWYWHFVDVVWLFLYISIYWW).

This sequence belongs to the cytochrome c oxidase subunit 3 family. As to quaternary structure, component of the cytochrome c oxidase (complex IV, CIV), a multisubunit enzyme composed of a catalytic core of 3 subunits and several supernumerary subunits. The complex exists as a monomer or a dimer and forms supercomplexes (SCs) in the inner mitochondrial membrane with ubiquinol-cytochrome c oxidoreductase (cytochrome b-c1 complex, complex III, CIII).

It is found in the mitochondrion inner membrane. It carries out the reaction 4 Fe(II)-[cytochrome c] + O2 + 8 H(+)(in) = 4 Fe(III)-[cytochrome c] + 2 H2O + 4 H(+)(out). Functionally, component of the cytochrome c oxidase, the last enzyme in the mitochondrial electron transport chain which drives oxidative phosphorylation. The respiratory chain contains 3 multisubunit complexes succinate dehydrogenase (complex II, CII), ubiquinol-cytochrome c oxidoreductase (cytochrome b-c1 complex, complex III, CIII) and cytochrome c oxidase (complex IV, CIV), that cooperate to transfer electrons derived from NADH and succinate to molecular oxygen, creating an electrochemical gradient over the inner membrane that drives transmembrane transport and the ATP synthase. Cytochrome c oxidase is the component of the respiratory chain that catalyzes the reduction of oxygen to water. Electrons originating from reduced cytochrome c in the intermembrane space (IMS) are transferred via the dinuclear copper A center (CU(A)) of subunit 2 and heme A of subunit 1 to the active site in subunit 1, a binuclear center (BNC) formed by heme A3 and copper B (CU(B)). The BNC reduces molecular oxygen to 2 water molecules using 4 electrons from cytochrome c in the IMS and 4 protons from the mitochondrial matrix. This Aedes aegypti (Yellowfever mosquito) protein is Cytochrome c oxidase subunit 3.